We begin with the raw amino-acid sequence, 1802 residues long: U3 small nucleolar RNA-associated protein 10 (1802 aa).

One copy of the HEAT 1 repeat lies at 581 to 618 (MDLQALLPFVLVTLADPSERVRREAAGILTIIGSLHKN). The next 2 membrane-spanning stretches (helical) occupy residues 946–966 (VQSGMSYLLSLALGSLLAIVN) and 1002–1022 (ALLLVAGLSVIAPELVLHSVM). 4 HEAT repeats span residues 1046 to 1083 (QTIDQVVPALIQSLRNQKRDVVSGTSELLLSFTAAFEH), 1253 to 1290 (LSLVDFLDTIEVLLQRPNDELRRKVLRLLEGRLRQNPE), 1297 to 1335 (TRMLDFLSVLVKIVESSPDILLKHAAVACIDRIADKYGK), and 1758 to 1795 (ALLPEMLPYISELMEDEDENVEKEVRKWVKQIEDVLGE).

The protein belongs to the HEATR1/UTP10 family. As to quaternary structure, component of the ribosomal small subunit (SSU) processome.

It localises to the nucleus. Its subcellular location is the nucleolus. The protein localises to the membrane. Functionally, involved in nucleolar processing of pre-18S ribosomal RNA. Involved in ribosome biosynthesis. The sequence is that of U3 small nucleolar RNA-associated protein 10 from Aspergillus oryzae (strain ATCC 42149 / RIB 40) (Yellow koji mold).